The chain runs to 60 residues: Large ribosomal subunit protein uL30 (60 aa).

This sequence belongs to the universal ribosomal protein uL30 family. Part of the 50S ribosomal subunit.

The polypeptide is Large ribosomal subunit protein uL30 (Idiomarina loihiensis (strain ATCC BAA-735 / DSM 15497 / L2-TR)).